The primary structure comprises 357 residues: Phenylalanine--tRNA ligase alpha subunit (357 aa).

Position 259 (glutamate 259) interacts with Mg(2+).

This sequence belongs to the class-II aminoacyl-tRNA synthetase family. Phe-tRNA synthetase alpha subunit type 1 subfamily. In terms of assembly, tetramer of two alpha and two beta subunits. Requires Mg(2+) as cofactor.

The protein localises to the cytoplasm. It catalyses the reaction tRNA(Phe) + L-phenylalanine + ATP = L-phenylalanyl-tRNA(Phe) + AMP + diphosphate + H(+). This is Phenylalanine--tRNA ligase alpha subunit from Jannaschia sp. (strain CCS1).